We begin with the raw amino-acid sequence, 252 residues long: 3-dehydroquinate dehydratase (252 aa).

3-dehydroquinate-binding positions include 46 to 48 and arginine 82; that span reads EWR. Catalysis depends on histidine 143, which acts as the Proton donor/acceptor. The Schiff-base intermediate with substrate role is filled by lysine 170. Residues arginine 212, serine 231, and glutamine 235 each contribute to the 3-dehydroquinate site.

This sequence belongs to the type-I 3-dehydroquinase family. Homodimer.

It catalyses the reaction 3-dehydroquinate = 3-dehydroshikimate + H2O. It functions in the pathway metabolic intermediate biosynthesis; chorismate biosynthesis; chorismate from D-erythrose 4-phosphate and phosphoenolpyruvate: step 3/7. Functionally, involved in the third step of the chorismate pathway, which leads to the biosynthesis of aromatic amino acids. Catalyzes the cis-dehydration of 3-dehydroquinate (DHQ) and introduces the first double bond of the aromatic ring to yield 3-dehydroshikimate. This Listeria welshimeri serovar 6b (strain ATCC 35897 / DSM 20650 / CCUG 15529 / CIP 8149 / NCTC 11857 / SLCC 5334 / V8) protein is 3-dehydroquinate dehydratase.